A 361-amino-acid polypeptide reads, in one-letter code: Cytochrome P450 family protein EryCII (361 aa).

It belongs to the cytochrome P450 family. As to quaternary structure, heterotetramer composed of EryCII and EryCIII.

It participates in antibiotic biosynthesis; erythromycin biosynthesis. Involved in the erythromycin biosynthesis pathway. Acts by forming a complex and stabilizing the desosaminyl transferase EryCIII. This is Cytochrome P450 family protein EryCII (eryCII) from Saccharopolyspora erythraea (strain ATCC 11635 / DSM 40517 / JCM 4748 / NBRC 13426 / NCIMB 8594 / NRRL 2338).